A 200-amino-acid polypeptide reads, in one-letter code: Ciliary microtubule inner protein 2C (200 aa).

It belongs to the CIMIP2 family. Microtubule inner protein component of sperm flagellar doublet microtubules.

It localises to the cytoplasm. It is found in the cytoskeleton. The protein resides in the cilium axoneme. The protein localises to the flagellum axoneme. In terms of biological role, microtubule inner protein (MIP) part of the dynein-decorated doublet microtubules (DMTs) in cilia axoneme, which is required for motile cilia beating. Binds to the intra-tubulin interfaces. This is Ciliary microtubule inner protein 2C (Cimip2c) from Mus musculus (Mouse).